Here is a 261-residue protein sequence, read N- to C-terminus: 5'-nucleotidase SurE (261 aa).

Residues D8, D9, S43, and N96 each contribute to the a divalent metal cation site.

The protein belongs to the SurE nucleotidase family. A divalent metal cation is required as a cofactor.

It is found in the cytoplasm. The enzyme catalyses a ribonucleoside 5'-phosphate + H2O = a ribonucleoside + phosphate. Its function is as follows. Nucleotidase that shows phosphatase activity on nucleoside 5'-monophosphates. In Roseobacter denitrificans (strain ATCC 33942 / OCh 114) (Erythrobacter sp. (strain OCh 114)), this protein is 5'-nucleotidase SurE.